We begin with the raw amino-acid sequence, 580 residues long: MFGVQETFGTALRDKALGVGMDPVRSWVRNVGVVDAKVAAQSGVAVSRAHFEKQPPSNLRKSNFFHFVLALYDRQGQPIEIERTSFVDFVENEKEFSTEKTNNGTHYKLQLLYSNGVRTEQDLYVRLIDSVTKQPISYEGQNKNPEMCRVLLTHEVMCSRCCEKKSCGNRNETPSDPVIIDRFFLKFFLKCNQNCLKTAGNPRDMRRFQVVLSTTVNVDGHVLAVSDNMFVHNNSKHGRRARRLDPSEGTDPSLEYATPCIKAISPSEGWTTGGAMVIIIGDNFFDGLQVVFGTMLVWSELITPHAIRVQTPPRHIPGVVEVTLSYKSKQFCKGAPGRFIYTALNEPTIDYGFQRLQKVIPRHPGDPERMAKEMLLKRAADLVEALYGTPHNNQDIILKRAADIAEALYSVPRNHNQIPALSSSPVHSGMMGINSYGGQLGVSISESQANNQGYIRNTSSISPRGYSSSSTPQQSNYSTPSNSMNGYSNVPMSNLGVPGSPGFINGSPTTSPYGIMPSSPPVGSSGSSSILPFSSSVFPSIKQKSAFAPVIRPQGSPSPACSSSNSNGFRAMTGLVVPPM.

The segment at 60–63 (RKSN) is interaction with DNA. The C5-type zinc finger occupies 148 to 167 (CRVLLTHEVMCSRCCEKKSC). Interaction with DNA regions lie at residues 194-201 (NCLKTAGN) and 233-236 (NNSK). The region spanning 259-341 (PCIKAISPSE…CKGAPGRFIY (83 aa)) is the IPT/TIG domain. Residues 455–492 (IRNTSSISPRGYSSSSTPQQSNYSTPSNSMNGYSNVPM) form a disordered region. Low complexity predominate over residues 459 to 481 (SSISPRGYSSSSTPQQSNYSTPS). Polar residues predominate over residues 482–492 (NSMNGYSNVPM).

Belongs to the COE family. In embryos, expressed in precursors of primary neurons. In adults, expressed at high levels in the brain, and at low levels in the somatic muscles, testis, and possibly the spleen.

It localises to the nucleus. Functionally, may play a pivotal role in the transcriptional cascade that specifies primary neurons in embryos. Stabilizes the higher neural potential of selected progenitor cells that express neurog2/X-ngnr-1 by maintaining Delta-Notch signaling. Thus ensures the transition between neural competence and irreversible commitment to a neural fate. Also promotes neuronal differentiation by activating neurod1 expression, directly or indirectly. The protein is Transcription factor coe2-B of Xenopus laevis (African clawed frog).